Consider the following 384-residue polypeptide: Succinyl-diaminopimelate desuccinylase (384 aa).

H75 contacts Zn(2+). D77 is a catalytic residue. A Zn(2+)-binding site is contributed by D108. E142 acts as the Proton acceptor in catalysis. The Zn(2+) site is built by E143, E171, and H357.

The protein belongs to the peptidase M20A family. DapE subfamily. As to quaternary structure, homodimer. Zn(2+) serves as cofactor. It depends on Co(2+) as a cofactor.

It carries out the reaction N-succinyl-(2S,6S)-2,6-diaminopimelate + H2O = (2S,6S)-2,6-diaminopimelate + succinate. The protein operates within amino-acid biosynthesis; L-lysine biosynthesis via DAP pathway; LL-2,6-diaminopimelate from (S)-tetrahydrodipicolinate (succinylase route): step 3/3. Its function is as follows. Catalyzes the hydrolysis of N-succinyl-L,L-diaminopimelic acid (SDAP), forming succinate and LL-2,6-diaminopimelate (DAP), an intermediate involved in the bacterial biosynthesis of lysine and meso-diaminopimelic acid, an essential component of bacterial cell walls. The protein is Succinyl-diaminopimelate desuccinylase of Shewanella oneidensis (strain ATCC 700550 / JCM 31522 / CIP 106686 / LMG 19005 / NCIMB 14063 / MR-1).